The chain runs to 535 residues: NAD(P)H-quinone oxidoreductase chain 4 2 (535 aa).

14 helical membrane-spanning segments follow: residues 9-29 (FPWLTTVIVYPVVAALFIPLI), 51-71 (WFALFIAVTDLLILLAGFYVG), 106-126 (LILLTAFVTTLAILAAWPVTL), 130-150 (LFYFLMLAMYGGQIGVFAVQD), 152-172 (LLFFLMWELELIPVYLLLSIW), 184-204 (FILYTALSSLFILVAGLAMAF), 227-247 (LLLYGAFLIAYGVKLPVFPLH), 258-278 (TAPVHMLLAGILLKMGGYALM), 290-310 (LYFAPVLIVLGVVNIIFAALT), 326-346 (ISHMGFVLIGIGSLTEIGMSG), 347-367 (AMLQMISHGLIGASLFFLVGA), 399-419 (LASLALPGMSGFVAELMVFIG), 432-452 (LVVVFLAAVGVILTPIYLLSM), and 479-499 (VFIIACLLIPIIGIGLYPKLV).

It belongs to the complex I subunit 4 family.

It localises to the cellular thylakoid membrane. It carries out the reaction a plastoquinone + NADH + (n+1) H(+)(in) = a plastoquinol + NAD(+) + n H(+)(out). It catalyses the reaction a plastoquinone + NADPH + (n+1) H(+)(in) = a plastoquinol + NADP(+) + n H(+)(out). In terms of biological role, NDH-1 shuttles electrons from NAD(P)H, via FMN and iron-sulfur (Fe-S) centers, to quinones in the respiratory chain. The immediate electron acceptor for the enzyme in this species is believed to be plastoquinone. Couples the redox reaction to proton translocation (for every two electrons transferred, four hydrogen ions are translocated across the cytoplasmic membrane), and thus conserves the redox energy in a proton gradient. The protein is NAD(P)H-quinone oxidoreductase chain 4 2 of Synechococcus sp. (strain JA-3-3Ab) (Cyanobacteria bacterium Yellowstone A-Prime).